The following is a 547-amino-acid chain: Phosphoethanolamine transferase EptA (547 aa).

At 1 to 9 the chain is on the cytoplasmic side; the sequence is MLKRFLKRP. The chain crosses the membrane as a helical span at residues 10 to 30; that stretch reads VLGQIAWLLLFSFYIAVCLNI. The Periplasmic segment spans residues 31 to 47; the sequence is AFYKQVLQDLPLNSLRN. Residues 48–68 traverse the membrane as a helical segment; it reads VLVFISMPVVAFSVVNSVLTL. Over 69–79 the chain is Cytoplasmic; that stretch reads ASFIWLNRLLA. The helical transmembrane segment at 80-100 threads the bilayer; the sequence is CVFILVGAAAQYFILTYGIII. At 101–123 the chain is on the periplasmic side; that stretch reads DRSMIANMMDTTPAETFALMTPQ. Residues 124–144 form a helical membrane-spanning segment; it reads MVLTLGLSGVLAAVIAFWVKI. Topologically, residues 145 to 154 are cytoplasmic; it reads RPATPRLRSG. A helical membrane pass occupies residues 155-175; sequence LYRLASVLISILLVILVAAFF. Topologically, residues 176-547 are periplasmic; that stretch reads YKDYASLFRN…ILQPCRRLSE (372 aa).

Belongs to the phosphoethanolamine transferase family. EptA subfamily.

The protein localises to the cell inner membrane. The protein operates within bacterial outer membrane biogenesis; LPS lipid A biosynthesis. Catalyzes the addition of a phosphoethanolamine moiety to the lipid A. The phosphoethanolamine modification is required for resistance to polymyxin. The protein is Phosphoethanolamine transferase EptA (eptA) of Salmonella typhimurium (strain LT2 / SGSC1412 / ATCC 700720).